The primary structure comprises 1041 residues: MWLRQSSGGGVASVGHVGPLRQRPIDAATDCDPRACYDSFCKHWQQAFEIIQHSAPPSHDDVLGVVSHLDYMVTLLLVELHHCNKVSLPAAEASGPPAAPCLEFLLSENLLDKLYEWACTTGRYANAVRLEQLKLYELLVSHSRHQLLCHEPFLRPLLKILASSQGEIFPPDLEKRLVILLNQLCVVLMQNVHLLDLFFFSAQTQVQEQILNGNVAPPKSGTTTNFIIFSLLIPYVHREGSLGHQARDALLLCMALSQKNSNIGTYIAQYSSICPLLVTGLGGLYSRLPNSIEISSIDWHRITPDDVTEIPELTLFMNALEFCNAVVQVAHEMIKQQLLDFMYQGFIVPVLGPAILQTNIDSQISAMSYLDLILRSITEPGLLRAFVRFLLDTEKFDGERILDALVERLNSPDANLCMVTMALFDTLLGLHCEDLMLELLLKFMLPGKHVPISHRHKINKIDPYLNSSEFFLELSPDVMKRARDLARPKSVHEPVVSELTPLPSLPSPVMSKTIGANWNYYGVHTGDSLYANIQAYLFEAHWRIAQCQKDCLKWANSYRYQKWPRHGQGRVHAHALELARQFFSEFGGGPIAANETGEKQLDSLQSIGESSGYESFKWRPADEESEATDTTVATTASEADMDHNSSSLSSVLGASGKRESWRTSNSNRNELILTDLDFSEDLFAQGTVSLGPFLNAIWGKLQTFTSNSLYVNLHLTGLITRLAWYPLPLIHSLLLRSDIAITSDTPSFHQVLRILKQQIDAELPVTEDSLEIIDVARSSLIDREFRLANARKGNEGSPMHHSQQQQMVTNSGQQQGQLRSAYATLSAATPVQATPTSAYDPFKRSDNKRRSISKSITSMFSRKSASTSTAPPNGSSASSGLSQIYAFFTGAASNLVGNNASNDGRGISQAQTSAGTCETSLSTQPPAGASRTGANATSTAASGSNSSIAGSTLTLSAQSNTTTHSASTLHGLDGGPSTGGFNSEPASLDSVASMGIIASTSGTERSRDLALCAVLMDEWLKELAAIAQEQSVVLVTEQGSL.

At serine 490 the chain carries Phosphoserine. Disordered stretches follow at residues 619 to 648 (RPAD…SSSL), 792 to 818 (KGNE…QGQL), 858 to 879 (SMFS…SASS), 903 to 947 (DGRG…SNSS), and 959 to 986 (SNTT…SEPA). Residues 628 to 637 (TDTTVATTAS) show a composition bias toward polar residues. At serine 797 the chain carries Phosphoserine. A compositionally biased stretch (polar residues) spans 800 to 818 (HHSQQQQMVTNSGQQQGQL). The segment covering 903 to 925 (DGRGISQAQTSAGTCETSLSTQP) has biased composition (polar residues). The span at 927-947 (AGASRTGANATSTAASGSNSS) shows a compositional bias: low complexity. Positions 959–968 (SNTTTHSAST) are enriched in polar residues.

Belongs to the FHIP family.

The polypeptide is FHIP family protein CG3558 (Drosophila melanogaster (Fruit fly)).